A 167-amino-acid chain; its full sequence is uncharacterized protein (167 aa).

This is an uncharacterized protein from Acidianus bottle-shaped virus (isolate Italy/Pozzuoli) (ABV).